Consider the following 328-residue polypeptide: Flap endonuclease 1 (328 aa).

The N-domain stretch occupies residues 1-98; that stretch reads MGVKFKDITN…ETQEERINIK (98 aa). Mg(2+) contacts are provided by Asp27, Asp80, Glu152, Glu154, Asp173, Asp175, and Asp227. The I-domain stretch occupies residues 116–248; the sequence is AARKYAARTT…KGIKLIHKYG (133 aa). Residues 320–328 form an interaction with PCNA region; sequence AQSSLEDWF.

Belongs to the XPG/RAD2 endonuclease family. FEN1 subfamily. As to quaternary structure, interacts with PCNA. PCNA stimulates the nuclease activity without altering cleavage specificity. The cofactor is Mg(2+).

Its function is as follows. Structure-specific nuclease with 5'-flap endonuclease and 5'-3' exonuclease activities involved in DNA replication and repair. During DNA replication, cleaves the 5'-overhanging flap structure that is generated by displacement synthesis when DNA polymerase encounters the 5'-end of a downstream Okazaki fragment. Binds the unpaired 3'-DNA end and kinks the DNA to facilitate 5' cleavage specificity. Cleaves one nucleotide into the double-stranded DNA from the junction in flap DNA, leaving a nick for ligation. Also involved in the base excision repair (BER) pathway. Acts as a genome stabilization factor that prevents flaps from equilibrating into structures that lead to duplications and deletions. Also possesses 5'-3' exonuclease activity on nicked or gapped double-stranded DNA. In Methanosphaera stadtmanae (strain ATCC 43021 / DSM 3091 / JCM 11832 / MCB-3), this protein is Flap endonuclease 1.